The sequence spans 497 residues: Ganglioside-induced differentiation-associated-protein 2 (497 aa).

The Macro domain maps to arginine 43–phenylalanine 223. Serine 280 carries the post-translational modification Phosphoserine. One can recognise a CRAL-TRIO domain in the interval aspartate 333–alanine 481.

The protein belongs to the GDAP2 family.

In Rattus norvegicus (Rat), this protein is Ganglioside-induced differentiation-associated-protein 2 (Gdap2).